A 1027-amino-acid chain; its full sequence is Kinesin heavy chain isoform 5A (1027 aa).

The residue at position 2 (Ala-2) is an N-acetylalanine. The region spanning 9-327 (SIKVLCRFRP…LMFGQRAKTI (319 aa)) is the Kinesin motor domain. Residue 86–93 (GQTSSGKT) coordinates ATP. The interval 174–315 (VSSPEEILDV…PSSYNDAETK (142 aa)) is microtubule-binding. Residues 271-361 (EGTKSYVPYR…KTKAQKETIA (91 aa)) are necessary for interaction with ZFYVE27. The stretch at 331-905 (ASVNLELTAE…EVDRIKEAVR (575 aa)) forms a coiled coil. An interaction with BICD2 region spans residues 353–1027 (TKAQKETIAK…FPLHQETAAS (675 aa)). Residue Thr-397 is modified to Phosphothreonine. Residues 906–936 (YKSSGKRGHSAQIAKPVRPGHYPASSPTNPY) are disordered. A globular region spans residues 907 to 1027 (KSSGKRGHSA…FPLHQETAAS (121 aa)).

Belongs to the TRAFAC class myosin-kinesin ATPase superfamily. Kinesin family. Kinesin subfamily. In terms of assembly, oligomer composed of two heavy chains and two light chains. Interacts with GRIP1. Interacts with FMR1 (via C-terminus); this interaction is increased in a mGluR-dependent manner. Interacts with BORCS5. Interacts with ZFYVE27. Interacts with VAPA, VAPB, SURF4, RAB11A (GDP-bound form), RAB11B (GDP-bound form) and RTN3 in a ZFYVE27-dependent manner. Interacts with BICD2. Interacts with DTNB. As to expression, expressed in brain.

Its subcellular location is the cytoplasm. The protein resides in the perinuclear region. The protein localises to the cytoskeleton. It is found in the perikaryon. The catalysed reaction is ATP + H2O + a kinesin associated with a microtubule at position (n) = ADP + phosphate a kinesin associated with a microtubule at position (n+1, toward the plus end).. Functionally, microtubule-dependent motor required for slow axonal transport of neurofilament proteins (NFH, NFM and NFL). Can induce formation of neurite-like membrane protrusions in non-neuronal cells in a ZFYVE27-dependent manner. The ZFYVE27-KIF5A complex contributes to the vesicular transport of VAPA, VAPB, SURF4, RAB11A, RAB11B and RTN3 proteins in neurons. Required for anterograde axonal transportation of MAPK8IP3/JIP3 which is essential for MAPK8IP3/JIP3 function in axon elongation. The protein is Kinesin heavy chain isoform 5A of Rattus norvegicus (Rat).